We begin with the raw amino-acid sequence, 602 residues long: Ligand-dependent nuclear receptor corepressor-like protein (602 aa).

Residues 104–124 (PSLDSSQSTPTEELSSQGQSN) form a disordered region. Residues 106–124 (LDSSQSTPTEELSSQGQSN) show a composition bias toward polar residues. Glycyl lysine isopeptide (Lys-Gly) (interchain with G-Cter in SUMO2) cross-links involve residues lysine 242, lysine 319, lysine 340, and lysine 397. 2 disordered regions span residues 495–521 (TVDG…KRGR) and 564–602 (ERSG…SKPV). Positions 516–568 (RKKRGRYRQYDHEIMEEAIAMVMSGKMSVSKAQGIYGVPHSTLEYKVKERSGT) constitute an HTH psq-type domain. A DNA-binding region (H-T-H motif) is located at residues 544–564 (VSKAQGIYGVPHSTLEYKVKE). The segment covering 585–602 (YNMTDSGTGSCKNSSKPV) has biased composition (polar residues).

The protein resides in the nucleus. Its function is as follows. May act as transcription activator that binds DNA elements with the sequence 5'-CCCTATCGATCGATCTCTACCT-3'. May play a role in spermatogenesis. This Homo sapiens (Human) protein is Ligand-dependent nuclear receptor corepressor-like protein (LCORL).